The sequence spans 284 residues: Aminoglycoside 6-adenylyltransferase (284 aa).

In terms of assembly, homodimer.

It localises to the cytoplasm. It catalyses the reaction streptomycin + ATP = 6-O-adenylylstreptomycin + diphosphate. The enzyme catalyses streptomycin + GTP = 6-O-guanylylstreptomycin + diphosphate. The catalysed reaction is streptidine + ATP = 6-O-adenylylstreptidine + diphosphate. Its function is as follows. Mediates bacterial resistance to streptomycin. Adenylates streptomycin on the O-6 residue. Adenylates streptidine on the O-6 residue. Does not act on spectinomycin, neomycin-B or kanamycin. Specific for ATP and GTP nucleotides incorporating a purine ring. No reaction with CTP or UTP. In Bacillus subtilis (strain 168), this protein is Aminoglycoside 6-adenylyltransferase.